A 149-amino-acid chain; its full sequence is uncharacterized protein (149 aa).

Residue Ser-21 is modified to Phosphoserine. A run of 2 helical transmembrane segments spans residues 48-68 (FMEF…WVLG) and 72-92 (VLAA…FQLV). The disordered stretch occupies residues 116-149 (AEEVPPPSYPSLEEENEGNEEIEESEEMNTLLSK). A compositionally biased stretch (acidic residues) spans 127-142 (LEEENEGNEEIEESEE).

Its subcellular location is the membrane. This is an uncharacterized protein from Schizosaccharomyces pombe (strain 972 / ATCC 24843) (Fission yeast).